The primary structure comprises 648 residues: Acetyl-coenzyme A synthetase (648 aa).

CoA-binding positions include 190 to 193 and Thr-310; that span reads RGGR. ATP-binding positions include 386-388, 410-415, Asp-499, and Arg-514; these read GEP and DTWWQT. Residue Ser-522 coordinates CoA. An ATP-binding site is contributed by Arg-525. Val-536, His-538, and Val-541 together coordinate Mg(2+). CoA is bound at residue Arg-583. Lys-608 carries the N6-acetyllysine modification.

It belongs to the ATP-dependent AMP-binding enzyme family. Mg(2+) serves as cofactor. Acetylated. Deacetylation by the SIR2-homolog deacetylase activates the enzyme.

It carries out the reaction acetate + ATP + CoA = acetyl-CoA + AMP + diphosphate. In terms of biological role, catalyzes the conversion of acetate into acetyl-CoA (AcCoA), an essential intermediate at the junction of anabolic and catabolic pathways. AcsA undergoes a two-step reaction. In the first half reaction, AcsA combines acetate with ATP to form acetyl-adenylate (AcAMP) intermediate. In the second half reaction, it can then transfer the acetyl group from AcAMP to the sulfhydryl group of CoA, forming the product AcCoA. In Methylobacterium radiotolerans (strain ATCC 27329 / DSM 1819 / JCM 2831 / NBRC 15690 / NCIMB 10815 / 0-1), this protein is Acetyl-coenzyme A synthetase.